We begin with the raw amino-acid sequence, 467 residues long: Ribulose bisphosphate carboxylase large chain (467 aa).

Position 5 is an N6,N6,N6-trimethyllysine (Lys5). Positions 114 and 164 each coordinate substrate. The active-site Proton acceptor is Lys166. Lys168 contributes to the substrate binding site. Residues Lys192, Asp194, and Glu195 each coordinate Mg(2+). At Lys192 the chain carries N6-carboxylysine. His285 acts as the Proton acceptor in catalysis. Positions 286, 318, and 370 each coordinate substrate.

This sequence belongs to the RuBisCO large chain family. Type I subfamily. In terms of assembly, heterohexadecamer of 8 large chains and 8 small chains; disulfide-linked. The disulfide link is formed within the large subunit homodimers. The cofactor is Mg(2+). The disulfide bond which can form in the large chain dimeric partners within the hexadecamer appears to be associated with oxidative stress and protein turnover.

The protein localises to the plastid. The protein resides in the chloroplast. It carries out the reaction 2 (2R)-3-phosphoglycerate + 2 H(+) = D-ribulose 1,5-bisphosphate + CO2 + H2O. The catalysed reaction is D-ribulose 1,5-bisphosphate + O2 = 2-phosphoglycolate + (2R)-3-phosphoglycerate + 2 H(+). Functionally, ruBisCO catalyzes two reactions: the carboxylation of D-ribulose 1,5-bisphosphate, the primary event in carbon dioxide fixation, as well as the oxidative fragmentation of the pentose substrate in the photorespiration process. Both reactions occur simultaneously and in competition at the same active site. This Hydrophyllum virginianum (Eastern waterleaf) protein is Ribulose bisphosphate carboxylase large chain.